Reading from the N-terminus, the 293-residue chain is 4-diphosphocytidyl-2-C-methyl-D-erythritol kinase (293 aa).

Lys-16 is a catalytic residue. An ATP-binding site is contributed by 99–109 (PMGAGLGGGSS). Residue Asp-141 is part of the active site.

Belongs to the GHMP kinase family. IspE subfamily.

It carries out the reaction 4-CDP-2-C-methyl-D-erythritol + ATP = 4-CDP-2-C-methyl-D-erythritol 2-phosphate + ADP + H(+). It functions in the pathway isoprenoid biosynthesis; isopentenyl diphosphate biosynthesis via DXP pathway; isopentenyl diphosphate from 1-deoxy-D-xylulose 5-phosphate: step 3/6. Functionally, catalyzes the phosphorylation of the position 2 hydroxy group of 4-diphosphocytidyl-2C-methyl-D-erythritol. The chain is 4-diphosphocytidyl-2-C-methyl-D-erythritol kinase from Burkholderia multivorans (strain ATCC 17616 / 249).